The sequence spans 247 residues: uncharacterized protein (247 aa).

Positions 161–187 (KEQSDATSDATTSEKNKSPECPKATTE) are disordered. Residues 172–187 (TSEKNKSPECPKATTE) show a composition bias toward basic and acidic residues.

This is an uncharacterized protein from Mus musculus (Mouse).